A 285-amino-acid polypeptide reads, in one-letter code: NAD kinase (285 aa).

Asp66 serves as the catalytic Proton acceptor. Residues 66 to 67 (DG), 137 to 138 (ND), Arg148, Arg165, Asp167, and 178 to 183 (TAYSMS) each bind NAD(+).

It belongs to the NAD kinase family. A divalent metal cation serves as cofactor.

The protein localises to the cytoplasm. It catalyses the reaction NAD(+) + ATP = ADP + NADP(+) + H(+). Its function is as follows. Involved in the regulation of the intracellular balance of NAD and NADP, and is a key enzyme in the biosynthesis of NADP. Catalyzes specifically the phosphorylation on 2'-hydroxyl of the adenosine moiety of NAD to yield NADP. The chain is NAD kinase from Chlorobium phaeobacteroides (strain DSM 266 / SMG 266 / 2430).